Here is a 134-residue protein sequence, read N- to C-terminus: FK506-binding protein 2 (134 aa).

Positions methionine 1 to alanine 19 are cleaved as a signal peptide. The 89-residue stretch at glycine 39–aspartate 127 folds into the PPIase FKBP-type domain. The Prevents secretion from ER motif lies at lysine 131 to leucine 134.

This sequence belongs to the FKBP-type PPIase family. FKBP2 subfamily.

Its subcellular location is the endoplasmic reticulum. The catalysed reaction is [protein]-peptidylproline (omega=180) = [protein]-peptidylproline (omega=0). With respect to regulation, inhibited by both FK506 and rapamycin. Functionally, PPIases accelerate the folding of proteins. It catalyzes the cis-trans isomerization of proline imidic peptide bonds in oligopeptides. The sequence is that of FK506-binding protein 2 (fpr2) from Aspergillus oryzae (strain ATCC 42149 / RIB 40) (Yellow koji mold).